A 133-amino-acid chain; its full sequence is Large ribosomal subunit protein eL14 (133 aa).

The protein belongs to the eukaryotic ribosomal protein eL14 family.

This is Large ribosomal subunit protein eL14 from Pisum sativum (Garden pea).